The chain runs to 234 residues: Glucosamine-6-phosphate deaminase (234 aa).

Asp-62 functions as the Proton acceptor; for enolization step in the catalytic mechanism. The For ring-opening step role is filled by Asn-128. The active-site Proton acceptor; for ring-opening step is His-130. The active-site For ring-opening step is Glu-135.

This sequence belongs to the glucosamine/galactosamine-6-phosphate isomerase family. NagB subfamily.

The enzyme catalyses alpha-D-glucosamine 6-phosphate + H2O = beta-D-fructose 6-phosphate + NH4(+). Its pathway is amino-sugar metabolism; N-acetylneuraminate degradation; D-fructose 6-phosphate from N-acetylneuraminate: step 5/5. Functionally, catalyzes the reversible isomerization-deamination of glucosamine 6-phosphate (GlcN6P) to form fructose 6-phosphate (Fru6P) and ammonium ion. The polypeptide is Glucosamine-6-phosphate deaminase (Streptococcus pyogenes serotype M49 (strain NZ131)).